Reading from the N-terminus, the 221-residue chain is DNA mismatch repair protein MutH (221 aa).

It belongs to the MutH family.

Its subcellular location is the cytoplasm. Its function is as follows. Sequence-specific endonuclease that cleaves unmethylated GATC sequences. It is involved in DNA mismatch repair. In Vibrio cholerae serotype O1 (strain ATCC 39541 / Classical Ogawa 395 / O395), this protein is DNA mismatch repair protein MutH.